The sequence spans 88 residues: Elongation factor 1-beta (88 aa).

This sequence belongs to the EF-1-beta/EF-1-delta family.

Promotes the exchange of GDP for GTP in EF-1-alpha/GDP, thus allowing the regeneration of EF-1-alpha/GTP that could then be used to form the ternary complex EF-1-alpha/GTP/AAtRNA. The protein is Elongation factor 1-beta (ef1b) of Archaeoglobus fulgidus (strain ATCC 49558 / DSM 4304 / JCM 9628 / NBRC 100126 / VC-16).